The sequence spans 191 residues: Calcium and integrin-binding protein 1 (191 aa).

Gly-2 carries N-myristoyl glycine lipidation. EF-hand domains follow at residues 103–138 and 148–183; these read TPDI…LTGE and EMKQ…SPDF. 10 residues coordinate Ca(2+): Asp-116, Asp-118, Asp-120, Thr-122, Asp-127, Asp-161, Asp-163, Asp-165, Thr-167, and Glu-172.

Monomer. Interacts with the heterodimeric integrin alpha-IIb/beta3 (ITGA2B-ITGB3). Interacts with ITGA2B (via cytoplasmic domain); the interaction is direct and calcium-dependent. Interacts with the protein kinases PLK2/SNK and PRKDC (via the region immediately upstream of the kinase domain). Interacts with PLK3; the interaction inhibits PLK3 kinase activity. Interacts with PSEN2. Interacts (via C-terminus) with F8. Interacts with NBR1 (via C-terminus). Interacts with FEZ1 (via C-terminus). Interacts with UBR5 (via C-terminus); the interaction is sensitive to DNA damage, and may target CIB1 for ubiquitin-mediated degradation. Interacts with IFI6; the interaction is direct. Interacts with BCL2. Interacts with ITPR3; the interaction occurs in a calcium dependent manner. Interacts with PTK2/FAK1. Interacts with MAP3K5; the interaction inhibits MAP3K5 activation by phosphorylation, and its subsequent interaction with TRAF2. Interacts (via C-terminal region) with STMN2 (via the N-terminal region); the interaction is direct, occurs in a calcium-dependent manner and attenuates the STMN2-induced neurite outgrowth inhibition. Interacts with SPHK1, the interaction occurs in a calcium-dependent manner. Interacts with ITGA2B (via C-terminal cytoplasmic tail); the interaction occurs upon platelet aggregation and is stabilized/increased in a calcium and magnesium-dependent manner. Interacts with PAK1 (via N-terminal region); the interaction is direct and occurs in a calcium-dependent manner. Interacts with RAC3 (via C-terminal region); the interaction induces their association with the cytoskeleton upon alpha-IIb/beta3 integrin-mediated adhesion. Interacts with ITGA5 and ITGAV. Interacts with MYO1C. Interacts with ITGA2B (via C-terminal cytoplasmic tail region). Interacts (via C-terminal region) with PPP3R1; the interaction increases upon cardiomyocytes hypertrophy. Interacts with CACNA1C; the interaction increases upon cardiomyocytes hypertrophy. Interacts with TAS1R2 (via C-terminus); this interaction is independent of the myristoylation state of CIB1. Interacts and forms a complex with TMC6 and TMC8; the interaction stabilizes each component of the complex.

It localises to the membrane. It is found in the cell membrane. Its subcellular location is the sarcolemma. The protein localises to the apical cell membrane. The protein resides in the cell projection. It localises to the ruffle membrane. It is found in the filopodium tip. Its subcellular location is the growth cone. The protein localises to the lamellipodium. The protein resides in the cytoplasm. It localises to the cytoskeleton. It is found in the microtubule organizing center. Its subcellular location is the centrosome. The protein localises to the perinuclear region. The protein resides in the nucleus. It localises to the neuron projection. It is found in the perikaryon. Calcium-binding protein that plays a role in the regulation of numerous cellular processes, such as cell differentiation, cell division, cell proliferation, cell migration, thrombosis, angiogenesis, cardiac hypertrophy and apoptosis. Involved in bone marrow megakaryocyte differentiation by negatively regulating thrombopoietin-mediated signaling pathway. Participates in the endomitotic cell cycle of megakaryocyte, a form of mitosis in which both karyokinesis and cytokinesis are interrupted. Plays a role in integrin signaling by negatively regulating alpha-IIb/beta3 activation in thrombin-stimulated megakaryocytes preventing platelet aggregation. Up-regulates PTK2/FAK1 activity, and is also needed for the recruitment of PTK2/FAK1 to focal adhesions; it thus appears to play an important role in focal adhesion formation. Positively regulates cell migration on fibronectin in a CDC42-dependent manner, the effect being negatively regulated by PAK1. Functions as a negative regulator of stress activated MAP kinase (MAPK) signaling pathways. Down-regulates inositol 1,4,5-trisphosphate receptor-dependent calcium signaling. Involved in sphingosine kinase SPHK1 translocation to the plasma membrane in a N-myristoylation-dependent manner preventing TNF-alpha-induced apoptosis. Regulates serine/threonine-protein kinase PLK3 activity for proper completion of cell division progression. Plays a role in microtubule (MT) dynamics during neuronal development; disrupts the MT depolymerization activity of STMN2 attenuating NGF-induced neurite outgrowth and the MT reorganization at the edge of lamellipodia. Promotes cardiomyocyte hypertrophy via activation of the calcineurin/NFAT signaling pathway. Stimulates calcineurin PPP3R1 activity by mediating its anchoring to the sarcolemma. In ischemia-induced (pathological or adaptive) angiogenesis, stimulates endothelial cell proliferation, migration and microvessel formation by activating the PAK1 and ERK1/ERK2 signaling pathway. Also promotes cancer cell survival and proliferation. May regulate cell cycle and differentiation of spermatogenic germ cells, and/or differentiation of supporting Sertoli cells. Forms a complex with TMC6/EVER1 and TMC8/EVER2 in lymphocytes and keratynocytes where CIB1 stabilizes TMC6 and TMC8 levels and reciprocally. In Bos taurus (Bovine), this protein is Calcium and integrin-binding protein 1 (CIB1).